We begin with the raw amino-acid sequence, 579 residues long: CTP synthase (579 aa).

Residues 1–281 (MPALRKHPQT…DAYVVRRLNL (281 aa)) form an amidoligase domain region. CTP is bound at residue Ser23. Ser23 contacts UTP. ATP is bound by residues 24–29 (SLGKGL) and Asp81. Mg(2+)-binding residues include Asp81 and Glu155. CTP-binding positions include 162 to 164 (DIE), 202 to 207 (KTKPTQ), and Lys238. UTP-binding positions include 202–207 (KTKPTQ) and Lys238. One can recognise a Glutamine amidotransferase type-1 domain in the interval 306–554 (RIALVGKYID…IGAALDYKAA (249 aa)). Gly369 is an L-glutamine binding site. Residue Cys396 is the Nucleophile; for glutamine hydrolysis of the active site. L-glutamine is bound by residues 397 to 400 (LGLQ), Glu419, and Arg480. Catalysis depends on residues His527 and Glu529.

Belongs to the CTP synthase family. Homotetramer.

It catalyses the reaction UTP + L-glutamine + ATP + H2O = CTP + L-glutamate + ADP + phosphate + 2 H(+). It carries out the reaction L-glutamine + H2O = L-glutamate + NH4(+). The catalysed reaction is UTP + NH4(+) + ATP = CTP + ADP + phosphate + 2 H(+). The protein operates within pyrimidine metabolism; CTP biosynthesis via de novo pathway; CTP from UDP: step 2/2. Its activity is regulated as follows. Allosterically activated by GTP, when glutamine is the substrate; GTP has no effect on the reaction when ammonia is the substrate. The allosteric effector GTP functions by stabilizing the protein conformation that binds the tetrahedral intermediate(s) formed during glutamine hydrolysis. Inhibited by the product CTP, via allosteric rather than competitive inhibition. Catalyzes the ATP-dependent amination of UTP to CTP with either L-glutamine or ammonia as the source of nitrogen. Regulates intracellular CTP levels through interactions with the four ribonucleotide triphosphates. This chain is CTP synthase, found in Mycobacterium sp. (strain KMS).